The chain runs to 402 residues: APO protein 3, mitochondrial (402 aa).

Residues 1–13 (MQRRKLVEISIFV) constitute a mitochondrion transit peptide. The disordered stretch occupies residues 37-59 (NDEDPLYADVPKPPKDKSERKPY). Basic and acidic residues predominate over residues 48 to 58 (KPPKDKSERKP). 2 consecutive APO domains span residues 127 to 213 (RCRL…DLEK) and 294 to 380 (TCGY…PVPD).

Belongs to the APO family.

Its subcellular location is the mitochondrion. In terms of biological role, may be involved in the stable assembly of several 4Fe-4S cluster-containing complexes of mitochondria. The protein is APO protein 3, mitochondrial (APO3) of Arabidopsis thaliana (Mouse-ear cress).